A 131-amino-acid chain; its full sequence is Transcription antitermination protein NusB (131 aa).

It belongs to the NusB family.

Functionally, involved in transcription antitermination. Required for transcription of ribosomal RNA (rRNA) genes. Binds specifically to the boxA antiterminator sequence of the ribosomal RNA (rrn) operons. This Campylobacter concisus (strain 13826) protein is Transcription antitermination protein NusB.